Here is a 156-residue protein sequence, read N- to C-terminus: Aspartate carbamoyltransferase regulatory chain (156 aa).

Zn(2+) contacts are provided by cysteine 109, cysteine 114, cysteine 138, and cysteine 141.

This sequence belongs to the PyrI family. Contains catalytic and regulatory chains. Requires Zn(2+) as cofactor.

Its function is as follows. Involved in allosteric regulation of aspartate carbamoyltransferase. The polypeptide is Aspartate carbamoyltransferase regulatory chain (Baumannia cicadellinicola subsp. Homalodisca coagulata).